The primary structure comprises 168 residues: Large ribosomal subunit protein uL10 (168 aa).

The protein belongs to the universal ribosomal protein uL10 family. In terms of assembly, part of the ribosomal stalk of the 50S ribosomal subunit. The N-terminus interacts with L11 and the large rRNA to form the base of the stalk. The C-terminus forms an elongated spine to which L12 dimers bind in a sequential fashion forming a multimeric L10(L12)X complex.

Functionally, forms part of the ribosomal stalk, playing a central role in the interaction of the ribosome with GTP-bound translation factors. In Lacticaseibacillus casei (strain BL23) (Lactobacillus casei), this protein is Large ribosomal subunit protein uL10.